The following is a 237-amino-acid chain: Insulin-like growth factor-binding protein 6 (237 aa).

Positions 1-25 are cleaved as a signal peptide; the sequence is MTPHRLLPPLLLTLLLAARPGGALA. The region spanning 26-105 is the IGFBP N-terminal domain; the sequence is RCPGCGQGVS…LQGRGRCGRA (80 aa). 5 disulfides stabilise this stretch: cysteine 27-cysteine 30, cysteine 38-cysteine 42, cysteine 55-cysteine 61, cysteine 69-cysteine 82, and cysteine 76-cysteine 102. The segment at 101–158 is disordered; that stretch reads RCGRARTPSGENPKESKPQAGTARSQDVNRRDQQRNSGTSTTPSRSNSGGVQDTEMGP. Over residues 135–151 the composition is skewed to polar residues; that stretch reads RNSGTSTTPSRSNSGGV. Residues 156–231 form the Thyroglobulin type-1 domain; the sequence is MGPCRKHLDS…SEGGDGSSLC (76 aa). 3 disulfides stabilise this stretch: cysteine 159-cysteine 186, cysteine 197-cysteine 208, and cysteine 210-cysteine 231. The segment at 215–237 is disordered; the sequence is GQPLPGSSEGGDGSSLCPTGSSG.

Interacts (via C-terminal domain) with PHB2. O-glycosylated.

The protein localises to the secreted. Functionally, IGF-binding proteins prolong the half-life of the IGFs and have been shown to either inhibit or stimulate the growth promoting effects of the IGFs on cell culture. They alter the interaction of IGFs with their cell surface receptors. Activates the MAPK signaling pathway and induces cell migration. The protein is Insulin-like growth factor-binding protein 6 (IGFBP6) of Bos taurus (Bovine).